The primary structure comprises 237 residues: Uridylate kinase (237 aa).

9 to 12 is an ATP binding site; sequence KLSG. Residue Gly51 participates in UMP binding. Residues Gly52 and Arg56 each contribute to the ATP site. UMP contacts are provided by residues Asp71 and 132–139; that span reads CGNPFFTT. Residues Thr159, Tyr165, and Asp168 each coordinate ATP.

This sequence belongs to the UMP kinase family. As to quaternary structure, homohexamer.

The protein localises to the cytoplasm. It catalyses the reaction UMP + ATP = UDP + ADP. Its pathway is pyrimidine metabolism; CTP biosynthesis via de novo pathway; UDP from UMP (UMPK route): step 1/1. Inhibited by UTP. In terms of biological role, catalyzes the reversible phosphorylation of UMP to UDP. The protein is Uridylate kinase of Prochlorococcus marinus (strain MIT 9313).